A 396-amino-acid chain; its full sequence is Elongation factor Tu (396 aa).

The tr-type G domain occupies 10–205; sequence KPHVNIGTIG…AVDESIPDPV (196 aa). A G1 region spans residues 19–26; the sequence is GHVDHGKT. A GTP-binding site is contributed by 19-26; the sequence is GHVDHGKT. T26 serves as a coordination point for Mg(2+). Residues 62-66 form a G2 region; the sequence is GITIN. The interval 83–86 is G3; that stretch reads DAPG. GTP-binding positions include 83-87 and 138-141; these read DAPGH and NKAD. The segment at 138-141 is G4; it reads NKAD. Positions 175–177 are G5; it reads SAL.

Belongs to the TRAFAC class translation factor GTPase superfamily. Classic translation factor GTPase family. EF-Tu/EF-1A subfamily. Monomer.

It localises to the cytoplasm. It catalyses the reaction GTP + H2O = GDP + phosphate + H(+). In terms of biological role, GTP hydrolase that promotes the GTP-dependent binding of aminoacyl-tRNA to the A-site of ribosomes during protein biosynthesis. This is Elongation factor Tu from Mycobacterium sp. (strain JLS).